Reading from the N-terminus, the 120-residue chain is Immunoglobulin lambda variable 4-60 (120 aa).

Residues 1–21 (MAWTPLLLLFPLLLHCTGSLS) form the signal peptide. Positions 22 to 46 (QPVLTQSSSASASLGSSVKLTCTLS) are framework-1. One can recognise an Ig-like domain in the interval 23 to 120 (PVLTQSSSAS…YYCETWDSNT (98 aa)). Cysteine 43 and cysteine 113 are disulfide-bonded. The complementarity-determining-1 stretch occupies residues 47 to 53 (SGHSSYI). The framework-2 stretch occupies residues 54–70 (IAWHQQQPGKAPRYLMK). Positions 71–77 (LEGSGSY) are complementarity-determining-2. The framework-3 stretch occupies residues 78-113 (NKGSGVPDRFSGSSSGADRYLTISNLQFEDEADYYC). The tract at residues 114–120 (ETWDSNT) is complementarity-determining-3.

As to quaternary structure, immunoglobulins are composed of two identical heavy chains and two identical light chains; disulfide-linked.

The protein resides in the secreted. Its subcellular location is the cell membrane. V region of the variable domain of immunoglobulin light chains that participates in the antigen recognition. Immunoglobulins, also known as antibodies, are membrane-bound or secreted glycoproteins produced by B lymphocytes. In the recognition phase of humoral immunity, the membrane-bound immunoglobulins serve as receptors which, upon binding of a specific antigen, trigger the clonal expansion and differentiation of B lymphocytes into immunoglobulins-secreting plasma cells. Secreted immunoglobulins mediate the effector phase of humoral immunity, which results in the elimination of bound antigens. The antigen binding site is formed by the variable domain of one heavy chain, together with that of its associated light chain. Thus, each immunoglobulin has two antigen binding sites with remarkable affinity for a particular antigen. The variable domains are assembled by a process called V-(D)-J rearrangement and can then be subjected to somatic hypermutations which, after exposure to antigen and selection, allow affinity maturation for a particular antigen. The polypeptide is Immunoglobulin lambda variable 4-60 (Homo sapiens (Human)).